Consider the following 96-residue polypeptide: Bacterial microcompartment shell protein EutM (96 aa).

The BMC domain occupies 3–87; sequence ALGMIETRGL…PHGDLEEVFP (85 aa).

This sequence belongs to the bacterial microcompartments protein family. In terms of assembly, homohexamer with a central pore of up to 8.6 Angstroms diameter. The hexamers pack into a two-dimensional array. Interacts with EutQ; a probably cytoplasm-facing helix (Val-49 to Gln-64) interacts with N-terminus of EutQ.

The protein localises to the bacterial microcompartment. Its pathway is amine and polyamine degradation; ethanolamine degradation. In terms of biological role, probably a major component of the bacterial microcompartment (BMC) shell dedicated to ethanolamine degradation. Each homohexamer has a central pore with an opening of up to 8.6 Angstroms. A positively-charged funnel leads to the pore from each side of the hexamer. The pore probably allows metabolite passage into and out of the BMC. Expression of eutK, eutL, eutM, eutN, eutS (eutSMNLK) in E.coli leads to formation of a single BMC. Expression alone leads to thick filaments that interfere with cell separation. Coexpression of eutQ with eutSMNLK permits E.coli to make cells with more than one mobile BMC, as is usual in vivo. May play a role in BMC shell biogenesis. Can replace homolog pduA in the pdu operon, cells grow better than wild-type on 1,2-propanediol and vitamin B12. Protein is incorporated into the pdu BMC microcompartment. Functionally, the ethanolamine (EA) catabolic bacterial microcompartment (BMC) probably concentrates low levels of ethanolamine catabolic enzymes, concentrates volatile reaction intermediates, keeps the level of toxic acetaldehyde low, generates enough acetyl-CoA to support cell growth, and maintains a pool of free coenzyme A (CoA) and NAD. Deletion of BMC genes (eutK, eutL, eutM) restores growth of eutD deletions, suggesting there are dedicated pools of coenzyme A (CoA) and NAD in the BMC. Expression of the eut operon allows this bacteria to use ethanolamine as a carbon, nitrogen and energy source. It relies on cobalamin (vitamin B12) both as a cofactor for the ethanolamine ammonia-lyase (EAL) activity and to induce the operon. EA enhances bacterial survival in macrophages in a concentration-dependent manner, suggesting it is an important nutrient during infection. This is Bacterial microcompartment shell protein EutM from Salmonella typhimurium (strain LT2 / SGSC1412 / ATCC 700720).